Reading from the N-terminus, the 247-residue chain is Phosphoribosylaminoimidazole-succinocarboxamide synthase (247 aa).

It belongs to the SAICAR synthetase family.

The enzyme catalyses 5-amino-1-(5-phospho-D-ribosyl)imidazole-4-carboxylate + L-aspartate + ATP = (2S)-2-[5-amino-1-(5-phospho-beta-D-ribosyl)imidazole-4-carboxamido]succinate + ADP + phosphate + 2 H(+). Its pathway is purine metabolism; IMP biosynthesis via de novo pathway; 5-amino-1-(5-phospho-D-ribosyl)imidazole-4-carboxamide from 5-amino-1-(5-phospho-D-ribosyl)imidazole-4-carboxylate: step 1/2. This Prochlorococcus marinus (strain NATL1A) protein is Phosphoribosylaminoimidazole-succinocarboxamide synthase.